The following is a 1372-amino-acid chain: MSVVNFYGQLSNTQQFDQIRINIASPDQVRSWSFGEVTKPETINYRTFKPEKDGLFCARIFGPVKDYECLCGKYKRMKNRGITCEKCGVEVTVSRVRRERMGHIELAAPVAHIWFLKSLPSRISTLLDMTMRDVEKILYFENYVVVDPGLSILQKGELLTEEELQKAKDKYGEDAFTASIGAEVIQQMLKEIDFLKLKQELYEELQTTSSEVKKKKLVKRLKLVEDFLESENKPEWMIMDVLPVIPPEIRPLVMLDGGRFATSDLNELYRRVINRNNRLKKLIESKAPDIIVRNEKRMLQEAVDALFDNGRRGRAAKNANKRPFKSLSDMLKGKQGRFRQNLLGKRVDYSGRSVIVVGSELKLHQCGLPKKMALELFKPFIYSKLELYGIATTIKAAKRMVEAEKPEVWDVLEEVIREHPVLLNRAPTLHRLGIQAFEPLLIEGKAIQLYPLVCAAFNADFDGDQMAVHIPLSIEAQLEARVFMMSTNNILSPANGRPIIVPDKDIVLGLYYLTLAFDNEVGEGMMFSDLAEMEHALYNKFITIHTKIKYRRNQLNAEGKMVPVIIDTTYGRLMVGELLPSNPNIEFKFINKQLTKKDISLVIDLVYRHCGQKATVIFADQLMKLGFKYACSSGISFGMDDMVVPESKSTHINETQLEIKEFEQQYSNGLITYGEKYNKVVDAWSRCTDRVANDMMKEIATPPVSDDPNHQKINAIYMMAISGARGSFQQIKQLGGMRGLMTKSNGQIIQTPIISNFKEGLTEFECFNSANGMRKGQIDTALKTASSGYLTRKLVDVAQDCIITEKDCGTDKGIEVKSVIEGGEVIVPLAEKILGRTAAIDIFHPVTNDLILNKGELINEAKLEQIESAGLDRIMIKSVLTCESTTGICSICYGRDLATGTLVSEGEAIGVIAAQSIGEPGTQLTMRTFHIGGAATKGAEVSSVEASYDAKVKIISRNVVINSEERKIVMSRNCELLLLDNNGNEKARHKIPYGARLLVDDGDMVIKTQKLAEWDPYTIPIITEKSGKVLFKDMVEGISIRDVTDEATGIPSKVIIESKQYSRGAELRPRIQLLDAKGEVIALSNGLEARYYLPVGAVLSVEDGVQISVGDIIARIPKESTTTKDITGGLPRVAELVEARRPKDHAVIAEIDGRVEFGKDYKSKRRIIIHPIDETMSIEYMVPKGKHVVVNEGDFVKKGDLLIDGNPVLQDILKVMGVEVLANYIVKEVQAVYRLQGVKIDDKHIEVIIRQMLQKVEITDSGGTTLLAGEKIDRHEFEEINEKAIKNGLKPAEAQLILQGITKASLQTRSFISAASFQETTRVLTEAAIAGKIDKLRGLKENVIVGRLVPAGTGYFMDKMRKAAVKLDEENV.

4 residues coordinate Zn(2+): C69, C71, C84, and C87. Mg(2+) contacts are provided by D460, D462, and D464. The Zn(2+) site is built by C808, C882, C889, and C892.

Belongs to the RNA polymerase beta' chain family. As to quaternary structure, the RNAP catalytic core consists of 2 alpha, 1 beta, 1 beta' and 1 omega subunit. When a sigma factor is associated with the core the holoenzyme is formed, which can initiate transcription. It depends on Mg(2+) as a cofactor. Zn(2+) serves as cofactor.

The catalysed reaction is RNA(n) + a ribonucleoside 5'-triphosphate = RNA(n+1) + diphosphate. DNA-dependent RNA polymerase catalyzes the transcription of DNA into RNA using the four ribonucleoside triphosphates as substrates. In Rickettsia felis (strain ATCC VR-1525 / URRWXCal2) (Rickettsia azadi), this protein is DNA-directed RNA polymerase subunit beta'.